Consider the following 2645-residue polypeptide: Non-reducing polyketide synthase AC (2645 aa).

Residues 73–2366 (ALQNLNEWLK…TDIVHNAWPM (2294 aa)) are N-terminal acylcarrier protein transacylase domain (SAT). Histidine 260 serves as the catalytic Proton donor/acceptor; for transacylase activity. Residues 416–834 (DDKIAVIGMA…GSNSSLVVTE (419 aa)) enclose the Ketosynthase family 3 (KS3) domain. Catalysis depends on for beta-ketoacyl synthase activity residues cysteine 583, histidine 718, and histidine 757. Positions 943 to 1252 (CFGGQISTYI…HAVSITTDKS (310 aa)) are malonyl-CoA:ACP transacylase (MAT) domain. The tract at residues 1324 to 1457 (SKGFTSFAGY…GVCSFCSATD (134 aa)) is N-terminal hotdog fold. Residues 1324-1637 (SKGFTSFAGY…YNKVPLPVMR (314 aa)) form the PKS/mFAS DH domain. The segment at 1330–1641 (FAGYIDGNQR…PLPVMRGILG (312 aa)) is product template (PT) domain. The Proton acceptor; for dehydratase activity role is filled by histidine 1359. A C-terminal hotdog fold region spans residues 1487–1637 (NIMQGTANIY…YNKVPLPVMR (151 aa)). Catalysis depends on aspartate 1542, which acts as the Proton donor; for dehydratase activity. The span at 1684 to 1696 (NGTTGTENPQIKS) shows a compositional bias: polar residues. The segment at 1684 to 1716 (NGTTGTENPQIKSKTNKVKKVPTRKSGGSDLET) is disordered. The segment covering 1697 to 1706 (KTNKVKKVPT) has biased composition (basic residues). One can recognise a Carrier domain in the interval 1711-1788 (GSDLETPAKT…SLVKYIREIR (78 aa)). Serine 1748 carries the O-(pantetheine 4'-phosphoryl)serine modification. Acidic residues predominate over residues 1794–1805 (QNVDDSESESEE). The disordered stretch occupies residues 1794 to 1816 (QNVDDSESESEELQQQATPIDSA). Residue tyrosine 2009 is the For methyltransferase activity of the active site. Positions 2023–2197 (EVFVEKIGSS…SVGYGHVDWT (175 aa)) are methyltransferase (CMeT) domain. Residues 2269 to 2573 (CVLITGATGS…NIIPFYDWVQ (305 aa)) are NADPH-binding (R) domain.

Its pathway is mycotoxin biosynthesis. In terms of biological role, non-reducing polyketide synthase; part of the gene cluster that mediates the biosynthesis of the selective antifungal agent ascochitine, an o-quinone methide that plays a possible protective role against other microbial competitors in nature and is considered to be important for pathogenicity of legume-associated Didymella species. The pathway probably begins with the synthesis of a keto-aldehyde intermediate by the ascochitine non-reducing polyketide synthase pksAC from successive condensations of 4 malonyl-CoA units, presumably with a simple acetyl-CoA starter unit. Release of the keto-aldehyde intermediate is consistent with the presence of the C-terminal reductive release domain. The HR-PKS (orf7) probably makes a diketide starter unit which is passed to the non-reducing polyketide synthase pksAC for further extension, producing ascochital and ascochitine. The aldehyde dehydrogenase (orf1), the 2-oxoglutarate-dependent dioxygenase (orf3) and the dehydrogenase (orf9) are probably involved in subsequent oxidations of methyl groups to the carboxylic acid of the heterocyclic ring. The ascochitine gene cluster also includes a gene encoding a short peptide (orf2) that is often found in secondary metabolite gene clusters and which function has still to be determined. In Didymella fabae (Leaf and pod spot disease fungus), this protein is Non-reducing polyketide synthase AC.